We begin with the raw amino-acid sequence, 67 residues long: Large ribosomal subunit protein bL35 (67 aa).

It belongs to the bacterial ribosomal protein bL35 family.

The sequence is that of Large ribosomal subunit protein bL35 from Rhizobium etli (strain CIAT 652).